The following is a 260-amino-acid chain: Proliferating cell nuclear antigen (260 aa).

Residues R61–K80 mediate DNA binding. K164 participates in a covalent cross-link: Glycyl lysine isopeptide (Lys-Gly) (interchain with G-Cter in ubiquitin). A phosphoserine mark is found at S259 and S260.

The protein belongs to the PCNA family. Homotrimer. Forms a complex with activator 1 heteropentamer in the presence of ATP. Component of the replisome complex. In terms of processing, monoubiquitinated by the ube2b-rad18 complex on Lys-164. Monoubiquitination at Lys-164 also takes place in undamaged proliferating cells, and is mediated by the dcx(dtl) complex, leading to enhance PCNA-dependent translesion DNA synthesis.

It is found in the nucleus. Functionally, this protein is an auxiliary protein of DNA polymerase delta and is involved in the control of eukaryotic DNA replication by increasing the polymerase's processibility during elongation of the leading strand. The sequence is that of Proliferating cell nuclear antigen (pcna) from Danio rerio (Zebrafish).